Consider the following 89-residue polypeptide: Small ribosomal subunit protein uS15 (89 aa).

This sequence belongs to the universal ribosomal protein uS15 family. In terms of assembly, part of the 30S ribosomal subunit. Forms a bridge to the 50S subunit in the 70S ribosome, contacting the 23S rRNA.

Its function is as follows. One of the primary rRNA binding proteins, it binds directly to 16S rRNA where it helps nucleate assembly of the platform of the 30S subunit by binding and bridging several RNA helices of the 16S rRNA. In terms of biological role, forms an intersubunit bridge (bridge B4) with the 23S rRNA of the 50S subunit in the ribosome. The chain is Small ribosomal subunit protein uS15 from Cellvibrio japonicus (strain Ueda107) (Pseudomonas fluorescens subsp. cellulosa).